The sequence spans 152 residues: UPF0178 protein NIS_0137 (152 aa).

This sequence belongs to the UPF0178 family.

The sequence is that of UPF0178 protein NIS_0137 from Nitratiruptor sp. (strain SB155-2).